The following is a 142-amino-acid chain: Endoribonuclease YbeY (142 aa).

Histidine 100, histidine 104, and histidine 110 together coordinate Zn(2+).

Belongs to the endoribonuclease YbeY family. Requires Zn(2+) as cofactor.

It is found in the cytoplasm. Functionally, single strand-specific metallo-endoribonuclease involved in late-stage 70S ribosome quality control and in maturation of the 3' terminus of the 16S rRNA. The protein is Endoribonuclease YbeY of Helicobacter pylori (strain G27).